A 735-amino-acid polypeptide reads, in one-letter code: Exocyst complex component 7 (735 aa).

2 coiled-coil regions span residues 5-42 and 63-85; these read QEAS…TKNM and VHKQ…SCLD. Residue S133 is modified to Phosphoserine. The disordered stretch occupies residues 239–268; that stretch reads HKSSSSSGVPYSPAIPNKRKDTPTKKPVKR.

This sequence belongs to the EXO70 family. In terms of assembly, the exocyst complex is composed of EXOC1, EXOC2, EXOC3, EXOC4, EXOC5, EXOC6, EXOC7 and EXOC8. Interacts with ARHQ in a GTP-dependent manner. Interacts with RAB11FIP3. As to expression, abundant in the ventricular zone, the outer subventricular zone and the cortical plate of the fetal cortex.

Its subcellular location is the cytoplasm. The protein resides in the cytosol. It is found in the cell membrane. It localises to the midbody. The protein localises to the midbody ring. Its function is as follows. Component of the exocyst complex involved in the docking of exocytic vesicles with fusion sites on the plasma membrane. In adipocytes, plays a crucial role in targeting SLC2A4 vesicle to the plasma membrane in response to insulin, perhaps directing the vesicle to the precise site of fusion. It is required for neuron survival and plays an essential role in cortical development. The protein is Exocyst complex component 7 (EXOC7) of Homo sapiens (Human).